The following is a 312-amino-acid chain: DNA-directed RNA polymerase subunit alpha (312 aa).

Residues 1-226 form an alpha N-terminal domain (alpha-NTD) region; it reads MIEFEKPKIT…DHLNLFVDLS (226 aa). The segment at 243–312 is alpha C-terminal domain (alpha-CTD); sequence TERVLDKIIE…ELGLSLKKRK (70 aa).

The protein belongs to the RNA polymerase alpha chain family. As to quaternary structure, homodimer. The RNAP catalytic core consists of 2 alpha, 1 beta, 1 beta' and 1 omega subunit. When a sigma factor is associated with the core the holoenzyme is formed, which can initiate transcription.

The catalysed reaction is RNA(n) + a ribonucleoside 5'-triphosphate = RNA(n+1) + diphosphate. In terms of biological role, DNA-dependent RNA polymerase catalyzes the transcription of DNA into RNA using the four ribonucleoside triphosphates as substrates. The sequence is that of DNA-directed RNA polymerase subunit alpha from Lactococcus lactis subsp. cremoris (strain MG1363).